We begin with the raw amino-acid sequence, 101 residues long: Small ribosomal subunit protein uS14A (101 aa).

Composition is skewed to basic and acidic residues over residues 28 to 44 and 61 to 70; these read KETIRRPSSSEDERAEA and RNRDAADGRP. Residues 28–74 form a disordered region; that stretch reads KETIRRPSSSEDERAEARAALQRLPRDASPVRLRNRDAADGRPRGHL.

The protein belongs to the universal ribosomal protein uS14 family. As to quaternary structure, part of the 30S ribosomal subunit. Contacts proteins S3 and S10.

In terms of biological role, binds 16S rRNA, required for the assembly of 30S particles and may also be responsible for determining the conformation of the 16S rRNA at the A site. The polypeptide is Small ribosomal subunit protein uS14A (Rhodococcus jostii (strain RHA1)).